Here is a 674-residue protein sequence, read N- to C-terminus: Membrane-anchored lipid-binding protein LAM5 (674 aa).

Disordered stretches follow at residues 1–52 and 65–151; these read MSDV…LNTE and NQSA…GSPL. Residues 1-633 lie on the Cytoplasmic side of the membrane; that stretch reads MSDVDNWEPV…AEQQGLKVTM (633 aa). The span at 69–81 shows a compositional bias: basic and acidic residues; sequence ADEHPTEIKHDQS. Positions 82-119 are enriched in low complexity; it reads RTSSTSSFFSGMISSFKSNVPSPVSRSTTPTSPVSQPS. Threonine 110 is modified (phosphothreonine). Phosphoserine occurs at positions 113 and 140. Phosphothreonine is present on threonine 143. Serine 149 is subject to Phosphoserine. A GRAM domain is found at 198-264; the sequence is KDFHETFKSV…FEDVTFMEKT (67 aa). Residues 336–357 show a composition bias toward acidic residues; that stretch reads IDEENNDKDANDNDTNENDDEN. A disordered region spans residues 336-380; sequence IDEENNDKDANDNDTNENDDENISTNETTPNSTSSSPDKEKEKAY. Positions 358–371 are enriched in low complexity; sequence ISTNETTPNSTSSS. Positions 409-582 constitute a VASt domain; it reads NEFVLKELPF…ILSKFIKNNV (174 aa). A helical membrane pass occupies residues 634 to 654; the sequence is ETWLFLYLIVVVLLLFNLFYI. Topologically, residues 655–674 are lumenal; that stretch reads RSIAVSLHQLVKLQLVELKL.

This sequence belongs to the YSP2 family.

The protein resides in the endoplasmic reticulum membrane. Its function is as follows. May be involved in sterol transfer between intracellular membranes. This Saccharomyces cerevisiae (strain ATCC 204508 / S288c) (Baker's yeast) protein is Membrane-anchored lipid-binding protein LAM5.